Reading from the N-terminus, the 271-residue chain is 3-methyl-2-oxobutanoate hydroxymethyltransferase (271 aa).

D49 and D88 together coordinate Mg(2+). 3-methyl-2-oxobutanoate contacts are provided by residues 49–50 (DS), D88, and K118. E120 serves as a coordination point for Mg(2+). Catalysis depends on E187, which acts as the Proton acceptor.

This sequence belongs to the PanB family. In terms of assembly, homodecamer; pentamer of dimers. The cofactor is Mg(2+).

The protein localises to the cytoplasm. The enzyme catalyses 3-methyl-2-oxobutanoate + (6R)-5,10-methylene-5,6,7,8-tetrahydrofolate + H2O = 2-dehydropantoate + (6S)-5,6,7,8-tetrahydrofolate. It participates in cofactor biosynthesis; (R)-pantothenate biosynthesis; (R)-pantoate from 3-methyl-2-oxobutanoate: step 1/2. Functionally, catalyzes the reversible reaction in which hydroxymethyl group from 5,10-methylenetetrahydrofolate is transferred onto alpha-ketoisovalerate to form ketopantoate. This chain is 3-methyl-2-oxobutanoate hydroxymethyltransferase, found in Bartonella bacilliformis (strain ATCC 35685 / KC583 / Herrer 020/F12,63).